The sequence spans 27 residues: Snake venom serine protease Afaacytin alpha/beta/beta' chains (27 aa).

The Peptidase S1 domain occupies 1–27 (VIGGAECNINEHRSLVLLYXSSSXFGE).

The protein belongs to the peptidase S1 family. Snake venom subfamily. In terms of assembly, heterodimer of an alpha and a beta chain. Subunit beta is constituted of two disulfide-linked polypeptidic chains, beta and beta'. Calcium appears to be required for structural cohesion of the molecule. In terms of processing, both chains alpha and beta are N-glycosylated. As to expression, expressed by the venom gland.

The protein resides in the secreted. Inhibited by diisopropylfluorophosphate (DFP), benzamidine, heparin and hirudin, but not by plasmatic thrombin inhibitors, antithrombin-III and ecotin. Snake venom serine protease that exhibits alpha-fibrinase and beta-fibrinogenase activities. It replaces missing factors VIII (F8) and IX (F9) in deficient plasmas by activating purified human factor X (F10) into factor Xa. It releases serotonin from platelets and induces platelet aggregation in human (but not in rabbit). Has caseinolytic, arginine-esterase and amidase activities. The protein is Snake venom serine protease Afaacytin alpha/beta/beta' chains of Cerastes cerastes (Horned desert viper).